Reading from the N-terminus, the 505-residue chain is Surface lipoprotein assembly modifier 2 (505 aa).

The signal sequence occupies residues 1–19 (MLYFRYGFLVVWCAAGVSA). The segment at 23-188 (ADAPAILDDK…RFRKKTEGLT (166 aa)) is N-terminal domain. Residues 189 to 505 (GWRFSGGISP…EVFVSADWRF (317 aa)) are C-terminal probable beta barrel. The next 14 membrane-spanning stretches (beta stranded) occupy residues 190 to 200 (WRFSGGISPAV), 232 to 243 (LNYEIEAEKLTP), 248 to 258 (HYLLFRSNIGG), 273 to 283 (FGRAYLGWQYK), 287 to 297 (QTAGILPFYQV), 326 to 335 (VGVQLSHTYR), 340 to 350 (WQFSVALEHYR), 368 to 377 (GFYVSSAKRL), 381 to 391 (ATVFGGWQFVR), 411 to 420 (NGVYAGWAQE), 427 to 437 (LNSRVSASYAR), 456 to 465 (WNVSLALSHD), 472 to 482 (IVPALNYRFGR), and 495 to 505 (SEVFVSADWRF).

This sequence belongs to the Slam family.

Its subcellular location is the cell outer membrane. Its function is as follows. Required for correct export to the cell surface of cell outer membrane lipoprotein HpuA heterologously in E.coli (hpuA does not exist in N.meningitidis strain MC58). The polypeptide is Surface lipoprotein assembly modifier 2 (Neisseria meningitidis serogroup B (strain ATCC BAA-335 / MC58)).